We begin with the raw amino-acid sequence, 616 residues long: Chaperone protein DnaK (616 aa).

Position 175 is a phosphothreonine; by autocatalysis (Thr175). Residues 579-605 (GGDPSQAGGFDPNAAGGAQQAPHDDNV) form a disordered region.

It belongs to the heat shock protein 70 family.

In terms of biological role, acts as a chaperone. This chain is Chaperone protein DnaK, found in Clostridium botulinum (strain Alaska E43 / Type E3).